The primary structure comprises 65 residues: Small ribosomal subunit protein bS21 (65 aa).

The span at Arg-46–Gln-57 shows a compositional bias: basic residues. Residues Arg-46 to Ser-65 form a disordered region.

Belongs to the bacterial ribosomal protein bS21 family.

This is Small ribosomal subunit protein bS21 from Chlorobaculum tepidum (strain ATCC 49652 / DSM 12025 / NBRC 103806 / TLS) (Chlorobium tepidum).